The following is a 108-amino-acid chain: Thiosulfate sulfurtransferase GlpE (108 aa).

The region spanning 17–105 is the Rhodanese domain; the sequence is QEKEAVLVDI…WQRQFPAEVA (89 aa). The active-site Cysteine persulfide intermediate is Cys65.

It belongs to the GlpE family.

Its subcellular location is the cytoplasm. The enzyme catalyses thiosulfate + hydrogen cyanide = thiocyanate + sulfite + 2 H(+). It carries out the reaction thiosulfate + [thioredoxin]-dithiol = [thioredoxin]-disulfide + hydrogen sulfide + sulfite + 2 H(+). Functionally, transferase that catalyzes the transfer of sulfur from thiosulfate to thiophilic acceptors such as cyanide or dithiols. May function in a CysM-independent thiosulfate assimilation pathway by catalyzing the conversion of thiosulfate to sulfite, which can then be used for L-cysteine biosynthesis. This chain is Thiosulfate sulfurtransferase GlpE, found in Shigella dysenteriae serotype 1 (strain Sd197).